A 432-amino-acid chain; its full sequence is Adenosylmethionine-8-amino-7-oxononanoate aminotransferase (432 aa).

Trp-52 provides a ligand contact to substrate. 112–113 (GS) serves as a coordination point for pyridoxal 5'-phosphate. Tyr-144 contacts substrate. Position 245 (Asp-245) interacts with pyridoxal 5'-phosphate. 2 residues coordinate substrate: Lys-274 and Gly-307. Lys-274 carries the post-translational modification N6-(pyridoxal phosphate)lysine. Residue 308–309 (PT) coordinates pyridoxal 5'-phosphate. Residue Arg-391 coordinates substrate.

The protein belongs to the class-III pyridoxal-phosphate-dependent aminotransferase family. BioA subfamily. As to quaternary structure, homodimer. It depends on pyridoxal 5'-phosphate as a cofactor.

Its subcellular location is the cytoplasm. The enzyme catalyses (8S)-8-amino-7-oxononanoate + S-adenosyl-L-methionine = S-adenosyl-4-methylsulfanyl-2-oxobutanoate + (7R,8S)-7,8-diammoniononanoate. The protein operates within cofactor biosynthesis; biotin biosynthesis; 7,8-diaminononanoate from 8-amino-7-oxononanoate (SAM route): step 1/1. Functionally, catalyzes the transfer of the alpha-amino group from S-adenosyl-L-methionine (SAM) to 7-keto-8-aminopelargonic acid (KAPA) to form 7,8-diaminopelargonic acid (DAPA). It is the only aminotransferase known to utilize SAM as an amino donor. The sequence is that of Adenosylmethionine-8-amino-7-oxononanoate aminotransferase from Buchnera aphidicola subsp. Schizaphis graminum (strain Sg).